Reading from the N-terminus, the 402-residue chain is uncharacterized protein (402 aa).

A signal peptide spans 1 to 44 (MLEKNLLPEILLAIHMPLNKGLTRVKAIVIIIVVIIAVIAGVVG). A disordered region spans residues 53–79 (NSVTTSSSSTTTSSSLSSTSISSSTTN).

This sequence belongs to the bacterial solute-binding protein 1 family. WtpA subfamily.

This is an uncharacterized protein from Saccharolobus solfataricus (strain ATCC 35092 / DSM 1617 / JCM 11322 / P2) (Sulfolobus solfataricus).